A 535-amino-acid chain; its full sequence is uncharacterized protein (535 aa).

Residues 1–34 (MKAIDNQIRNISSSHQDKHSDKVNSHQHHGKVDK) are disordered. The segment covering 15–34 (HQDKHSDKVNSHQHHGKVDK) has biased composition (basic and acidic residues).

This is an uncharacterized protein from Escherichia coli (strain K12).